Reading from the N-terminus, the 880-residue chain is A-adding tRNA nucleotidyltransferase (880 aa).

2 consecutive CBS domains span residues 315 to 373 and 377 to 435; these read MSSP…NLPV and MHTE…RNAE. 487–490 contributes to the ATP binding site; it reads GFVR. Mg(2+)-binding residues include aspartate 500 and aspartate 502. ATP is bound by residues 574–575, asparagine 579, 619–628, arginine 632, and arginine 661; these read RD and DPTRVFRAIR.

This sequence belongs to the tRNA nucleotidyltransferase/poly(A) polymerase family. It depends on Mg(2+) as a cofactor.

The enzyme catalyses a tRNA with a 3' CC end + ATP = a tRNA with a 3' CCA end + diphosphate. Functionally, tRNA nucleotidyltransferase involved in the synthesis of the tRNA CCA terminus. Adds the terminal adenosine residue to tRNA. The polypeptide is A-adding tRNA nucleotidyltransferase (Geobacter sulfurreducens (strain ATCC 51573 / DSM 12127 / PCA)).